We begin with the raw amino-acid sequence, 160 residues long: SsrA-binding protein (160 aa).

It belongs to the SmpB family.

It is found in the cytoplasm. Functionally, required for rescue of stalled ribosomes mediated by trans-translation. Binds to transfer-messenger RNA (tmRNA), required for stable association of tmRNA with ribosomes. tmRNA and SmpB together mimic tRNA shape, replacing the anticodon stem-loop with SmpB. tmRNA is encoded by the ssrA gene; the 2 termini fold to resemble tRNA(Ala) and it encodes a 'tag peptide', a short internal open reading frame. During trans-translation Ala-aminoacylated tmRNA acts like a tRNA, entering the A-site of stalled ribosomes, displacing the stalled mRNA. The ribosome then switches to translate the ORF on the tmRNA; the nascent peptide is terminated with the 'tag peptide' encoded by the tmRNA and targeted for degradation. The ribosome is freed to recommence translation, which seems to be the essential function of trans-translation. This chain is SsrA-binding protein, found in Pasteurella multocida (strain Pm70).